The primary structure comprises 323 residues: Viral cathepsin (323 aa).

The N-terminal stretch at 1–16 is a signal peptide; it reads MNKILFYLFVYGVVNS. The propeptide at 17–112 is activation peptide; the sequence is AAYDLLKAPN…IVLDQPPGKG (96 aa). 3 disulfide bridges follow: Cys-133–Cys-174, Cys-167–Cys-207, and Cys-262–Cys-310. Residue Cys-136 is part of the active site. The N-linked (GlcNAc...) asparagine; by host glycan is linked to Asn-158. Catalysis depends on residues His-269 and Asn-289.

Belongs to the peptidase C1 family. Post-translationally, synthesized as an inactive proenzyme and activated by proteolytic removal of the inhibitory propeptide.

The enzyme catalyses Endopeptidase of broad specificity, hydrolyzing substrates of both cathepsin L and cathepsin B.. Cysteine protease that plays an essential role in host liquefaction to facilitate horizontal transmission of the virus. May participate in the degradation of foreign protein expressed by the baculovirus system. This Helicoverpa zea (Corn earworm moth) protein is Viral cathepsin (VCATH).